We begin with the raw amino-acid sequence, 399 residues long: Proteasome-activating nucleotidase (399 aa).

Residues 19-60 are a coiled coil; the sequence is ITYLKRRIRQLELQVRMLEADKERLERELSRLRSEMSRLRQP. Residues 184–189 and His-323 contribute to the ATP site; that span reads GCGKTL. Positions 397-399 are docks into pockets in the proteasome alpha-ring to cause gate opening; that stretch reads IYG.

Belongs to the AAA ATPase family. Homohexamer. The hexameric complex has a two-ring architecture resembling a top hat that caps the 20S proteasome core at one or both ends. Upon ATP-binding, the C-terminus of PAN interacts with the alpha-rings of the proteasome core by binding to the intersubunit pockets.

The protein resides in the cytoplasm. In terms of biological role, ATPase which is responsible for recognizing, binding, unfolding and translocation of substrate proteins into the archaeal 20S proteasome core particle. Is essential for opening the gate of the 20S proteasome via an interaction with its C-terminus, thereby allowing substrate entry and access to the site of proteolysis. Thus, the C-termini of the proteasomal ATPase function like a 'key in a lock' to induce gate opening and therefore regulate proteolysis. Unfolding activity requires energy from ATP hydrolysis, whereas ATP binding alone promotes ATPase-20S proteasome association which triggers gate opening, and supports translocation of unfolded substrates. The sequence is that of Proteasome-activating nucleotidase from Pyrococcus horikoshii (strain ATCC 700860 / DSM 12428 / JCM 9974 / NBRC 100139 / OT-3).